The chain runs to 232 residues: MKIGIIGAMEEEVTLLRDKIDNRQTITLGGCEIYTGQLNGTEVALLKSGIGKVAAALGATLLLEHCKPDVIINTGSAGGLASTLKVGDIVVSDEARYHDADVTAFGYEYGQLPGCPAGFKADDKLIAAAESCIRELNLNAVRGLIVSGDAFINGSVGLAKIRHNFPDAVAVEMEATAIAHVCYNFSVPFVVVRAISDVADQQSHLSFDEFLAVAAKQSTLMVETLVQKLAHG.

Catalysis depends on Glu12, which acts as the Proton acceptor. Substrate-binding positions include Gly78, Ile152, and 173–174 (ME). Asp197 (proton donor) is an active-site residue.

This sequence belongs to the PNP/UDP phosphorylase family. MtnN subfamily. As to quaternary structure, homodimer.

The enzyme catalyses S-adenosyl-L-homocysteine + H2O = S-(5-deoxy-D-ribos-5-yl)-L-homocysteine + adenine. It carries out the reaction S-methyl-5'-thioadenosine + H2O = 5-(methylsulfanyl)-D-ribose + adenine. The catalysed reaction is 5'-deoxyadenosine + H2O = 5-deoxy-D-ribose + adenine. The protein operates within amino-acid biosynthesis; L-methionine biosynthesis via salvage pathway; S-methyl-5-thio-alpha-D-ribose 1-phosphate from S-methyl-5'-thioadenosine (hydrolase route): step 1/2. Functionally, catalyzes the irreversible cleavage of the glycosidic bond in both 5'-methylthioadenosine (MTA) and S-adenosylhomocysteine (SAH/AdoHcy) to adenine and the corresponding thioribose, 5'-methylthioribose and S-ribosylhomocysteine, respectively. Also cleaves 5'-deoxyadenosine, a toxic by-product of radical S-adenosylmethionine (SAM) enzymes, into 5-deoxyribose and adenine. Thus, is required for in vivo function of the radical SAM enzymes biotin synthase and lipoic acid synthase, that are inhibited by 5'-deoxyadenosine accumulation. The sequence is that of 5'-methylthioadenosine/S-adenosylhomocysteine nucleosidase from Salmonella enteritidis PT4 (strain P125109).